Reading from the N-terminus, the 287-residue chain is Acetyl-coenzyme A carboxylase carboxyl transferase subunit beta (287 aa).

In terms of domain architecture, CoA carboxyltransferase N-terminal spans 25–287 (VWTKCSACEQ…KMLNTHVIEE (263 aa)). Positions 29, 32, 48, and 51 each coordinate Zn(2+). The segment at 29 to 51 (CSACEQVLYRAELERNLEVCPKC) adopts a C4-type zinc-finger fold.

Belongs to the AccD/PCCB family. In terms of assembly, acetyl-CoA carboxylase is a heterohexamer composed of biotin carboxyl carrier protein (AccB), biotin carboxylase (AccC) and two subunits each of ACCase subunit alpha (AccA) and ACCase subunit beta (AccD). Zn(2+) is required as a cofactor.

The protein resides in the cytoplasm. It carries out the reaction N(6)-carboxybiotinyl-L-lysyl-[protein] + acetyl-CoA = N(6)-biotinyl-L-lysyl-[protein] + malonyl-CoA. It participates in lipid metabolism; malonyl-CoA biosynthesis; malonyl-CoA from acetyl-CoA: step 1/1. Component of the acetyl coenzyme A carboxylase (ACC) complex. Biotin carboxylase (BC) catalyzes the carboxylation of biotin on its carrier protein (BCCP) and then the CO(2) group is transferred by the transcarboxylase to acetyl-CoA to form malonyl-CoA. The chain is Acetyl-coenzyme A carboxylase carboxyl transferase subunit beta from Aeromonas hydrophila subsp. hydrophila (strain ATCC 7966 / DSM 30187 / BCRC 13018 / CCUG 14551 / JCM 1027 / KCTC 2358 / NCIMB 9240 / NCTC 8049).